The chain runs to 691 residues: DNA topoisomerase 1 (691 aa).

The Toprim domain occupies 3–114 (DYLVIVESPA…DCRVVFNEIT (112 aa)). Mg(2+)-binding residues include glutamate 9 and aspartate 82. The Topo IA-type catalytic domain maps to 129–558 (NMDLVDAQQA…NFYTDFEKRV (430 aa)). Residues 163 to 168 (SAGRVQ) are interaction with DNA. Tyrosine 298 acts as the O-(5'-phospho-DNA)-tyrosine intermediate in catalysis. 3 consecutive C4-type zinc fingers follow at residues 579–605 (CELC…FPDC), 619–647 (CPSC…YPDC), and 660–683 (CPKC…CVEC).

This sequence belongs to the type IA topoisomerase family. As to quaternary structure, monomer. Interacts with the RNA polymerase core. Mg(2+) serves as cofactor.

The enzyme catalyses ATP-independent breakage of single-stranded DNA, followed by passage and rejoining.. In terms of biological role, releases the supercoiling and torsional tension of DNA, which is introduced during the DNA replication and transcription, by transiently cleaving and rejoining one strand of the DNA duplex. Introduces a single-strand break via transesterification at a target site in duplex DNA. The scissile phosphodiester is attacked by the catalytic tyrosine of the enzyme, resulting in the formation of a DNA-(5'-phosphotyrosyl)-enzyme intermediate and the expulsion of a 3'-OH DNA strand. The free DNA strand then undergoes passage around the unbroken strand, thus removing DNA supercoils. Finally, in the religation step, the DNA 3'-OH attacks the covalent intermediate to expel the active-site tyrosine and restore the DNA phosphodiester backbone. The chain is DNA topoisomerase 1 from Bacillus subtilis (strain 168).